The sequence spans 130 residues: Small ribosomal subunit protein uS11 (130 aa).

It belongs to the universal ribosomal protein uS11 family. As to quaternary structure, part of the 30S ribosomal subunit. Interacts with proteins S7 and S18. Binds to IF-3.

Its function is as follows. Located on the platform of the 30S subunit, it bridges several disparate RNA helices of the 16S rRNA. Forms part of the Shine-Dalgarno cleft in the 70S ribosome. The protein is Small ribosomal subunit protein uS11 of Prochlorococcus marinus (strain MIT 9515).